A 170-amino-acid polypeptide reads, in one-letter code: Urease accessory protein UreE (170 aa).

The protein belongs to the UreE family.

The protein localises to the cytoplasm. Functionally, involved in urease metallocenter assembly. Binds nickel. Probably functions as a nickel donor during metallocenter assembly. The polypeptide is Urease accessory protein UreE (Helicobacter acinonychis (strain Sheeba)).